The chain runs to 1715 residues: Ubiquitin carboxyl-terminal hydrolase 32 (1715 aa).

EF-hand domains lie at Ile161–Gly196 and Pro197–Val232. Positions 174, 176, 178, 180, 185, 210, 212, 214, and 221 each coordinate Ca(2+). Residues Gln314–Ile492 enclose the DUSP domain. Residues Gln393–Pro429 form a disordered region. Positions Gly408 to Gly419 are enriched in low complexity. Residues Thr677–Lys1675 form the USP domain. The active-site Nucleophile is the Cys686. Composition is skewed to polar residues over residues Thr1103–Thr1126 and Tyr1150–His1164. Disordered stretches follow at residues Thr1103–Ala1213 and Asp1536–Leu1569. Residues Asp1171–Asn1180 are compositionally biased toward acidic residues. Residues Asp1188–Pro1209 show a composition bias toward polar residues. Over residues Ala1540–Leu1549 the composition is skewed to basic and acidic residues. Over residues Pro1550–Thr1559 the composition is skewed to polar residues. The Proton acceptor role is filled by His1633.

The protein belongs to the peptidase C19 family. USP20/USP33 subfamily.

It catalyses the reaction Thiol-dependent hydrolysis of ester, thioester, amide, peptide and isopeptide bonds formed by the C-terminal Gly of ubiquitin (a 76-residue protein attached to proteins as an intracellular targeting signal).. Functionally, deubiquitinating enzyme that acts as an inhibitor of mitophagy probably by counteracting the action of park. Possibly functions by hydrolyzing ubiquitin attached by park on target proteins, thereby reducing park's ability to drive mitophagy. This is Ubiquitin carboxyl-terminal hydrolase 32 from Drosophila melanogaster (Fruit fly).